The chain runs to 286 residues: 4-diphosphocytidyl-2-C-methyl-D-erythritol kinase (286 aa).

The active site involves K10. Residue 94-104 (PVAAGLAGGSS) coordinates ATP. The active site involves D136.

Belongs to the GHMP kinase family. IspE subfamily.

It catalyses the reaction 4-CDP-2-C-methyl-D-erythritol + ATP = 4-CDP-2-C-methyl-D-erythritol 2-phosphate + ADP + H(+). It participates in isoprenoid biosynthesis; isopentenyl diphosphate biosynthesis via DXP pathway; isopentenyl diphosphate from 1-deoxy-D-xylulose 5-phosphate: step 3/6. Catalyzes the phosphorylation of the position 2 hydroxy group of 4-diphosphocytidyl-2C-methyl-D-erythritol. This chain is 4-diphosphocytidyl-2-C-methyl-D-erythritol kinase, found in Exiguobacterium sibiricum (strain DSM 17290 / CCUG 55495 / CIP 109462 / JCM 13490 / 255-15).